The primary structure comprises 350 residues: Protein pelota homolog (350 aa).

This sequence belongs to the eukaryotic release factor 1 family. Pelota subfamily. In terms of assembly, monomer. A divalent metal cation is required as a cofactor.

The protein resides in the cytoplasm. In terms of biological role, may function in recognizing stalled ribosomes, interact with stem-loop structures in stalled mRNA molecules, and effect endonucleolytic cleavage of the mRNA. May play a role in the release non-functional ribosomes and degradation of damaged mRNAs. Has endoribonuclease activity. This is Protein pelota homolog from Methanosarcina mazei (strain ATCC BAA-159 / DSM 3647 / Goe1 / Go1 / JCM 11833 / OCM 88) (Methanosarcina frisia).